A 333-amino-acid polypeptide reads, in one-letter code: Atrochrysone carboxyl ACP thioesterase (333 aa).

Positions 104, 106, 108, and 109 each coordinate Zn(2+). Catalysis depends on Asp-108, which acts as the Proton donor/acceptor.

Belongs to the metallo-beta-lactamase superfamily. Requires Zn(2+) as cofactor.

The catalysed reaction is atrochrysone carboxyl-[ACP] + H2O = atrochrysone carboxylate + holo-[ACP] + H(+). It functions in the pathway pigment biosynthesis. Atrochrysone carboxyl ACP thioesterase; part of the gene cluster that mediates the biosynthesis of the bianthraquinone cladofulvin, a conidial pigment not required for virulence but that plays a role in fitness and resistance to environmental stresses including UV light and low-temperature stress. The pathway begins with the synthesis of atrochrysone thioester by the polyketide synthase (PKS) claG. The atrochrysone carboxyl ACP thioesterase claF then breaks the thioester bond and releases the atrochrysone carboxylic acid from claG. This compound is decarboxylated by claH to yield emodin, which is further converted to chrysophanol hydroquinone by the reductase claC and the dehydratase claB. The cytochrome P450 monooxygenase claM then catalyzes the dimerization of nataloe-emodin to cladofulvin. This Passalora fulva (Tomato leaf mold) protein is Atrochrysone carboxyl ACP thioesterase.